We begin with the raw amino-acid sequence, 635 residues long: MAGUK p55 subfamily member 4 (635 aa).

Residues 1 to 16 are compositionally biased toward basic and acidic residues; the sequence is MRQSDRGAELTNEDRA. Residues 1-23 form a disordered region; that stretch reads MRQSDRGAELTNEDRALPTPPDP. L27 domains follow at residues 23-79 and 86-136; these read PENG…EKKL and AQIL…FEPL. A PDZ domain is found at 153–234; it reads IVCLVKNQQP…TIMFKVIPVS (82 aa). The SH3 domain occupies 241 to 311; that stretch reads QKMVYVRAMI…PSNHLLKRKQ (71 aa). The Guanylate kinase-like domain occupies 426 to 615; that stretch reads HRLIVLVGPS…ACGQLLSAIQ (190 aa). The stretch at 567-622 forms a coiled coil; sequence VDMKFKDEDLQEMEELAQKMESQFGQFFDHVIVNDNLQDACGQLLSAIQKAQEELQ.

This sequence belongs to the MAGUK family. In terms of assembly, may interact with GRIA2. Interacts with MPDZ. Forms a complex with CRB1 and PALS1. Interacts with FASLG. As to expression, detected in the retina (at protein level). Highly enriched in the retina where it is mainly expressed by rod photoreceptors; detected in the inner segment of the photoreceptor layer and in the outer nuclear layer. Also detected at much lower levels in pineal gland, cerebellum, cortex, hippocampus, olfactory bulb, heart, liver and spleen. Expressed in the CA1-CA3 regions of pyramidal cell layers and in the granule cell layer of dentate gyrus in the hippocampus. In the cerebellum, expressed in Purkinje cells and throughout the granule cell layer. In the olfactory bulb, expressed in mitral cells.

The protein resides in the cytoplasm. May play a role in retinal photoreceptors development. The chain is MAGUK p55 subfamily member 4 (Mpp4) from Mus musculus (Mouse).